A 133-amino-acid polypeptide reads, in one-letter code: MLPAQNKLTSSVQFRTTMRKGRRAGSSTVVVHLWDSAESLDGTGEKGEVASFGGPRFGLIVSKAVGNAVIRHRTSRRLRHVCARIAADSPELLTPTHHVVIRALAGSGQASSQDLERDIRHGLRKAGRVRTDK.

The protein belongs to the RnpA family. As to quaternary structure, consists of a catalytic RNA component (M1 or rnpB) and a protein subunit.

It carries out the reaction Endonucleolytic cleavage of RNA, removing 5'-extranucleotides from tRNA precursor.. In terms of biological role, RNaseP catalyzes the removal of the 5'-leader sequence from pre-tRNA to produce the mature 5'-terminus. It can also cleave other RNA substrates such as 4.5S RNA. The protein component plays an auxiliary but essential role in vivo by binding to the 5'-leader sequence and broadening the substrate specificity of the ribozyme. In Corynebacterium efficiens (strain DSM 44549 / YS-314 / AJ 12310 / JCM 11189 / NBRC 100395), this protein is Ribonuclease P protein component.